The sequence spans 162 residues: Allophycocyanin alpha-B chain (162 aa).

Asn-71 carries the post-translational modification N4-methylasparagine. Cys-81 contributes to the (2R,3E)-phycocyanobilin binding site.

The protein belongs to the phycobiliprotein family. Post-translationally, contains one covalently linked phycocyanobilin chromophore.

Its subcellular location is the plastid. It is found in the cyanelle thylakoid membrane. In terms of biological role, allophycocyanin is a photosynthetic bile pigment-protein complex with maximum absorption at approximately 650 nanometers. This is Allophycocyanin alpha-B chain (apcD) from Cyanophora paradoxa.